Here is a 127-residue protein sequence, read N- to C-terminus: Cytochrome b-c1 complex subunit 7, mitochondrial (127 aa).

It belongs to the UQCRB/QCR7 family. As to quaternary structure, component of the ubiquinol-cytochrome c oxidoreductase (cytochrome b-c1 complex, complex III, CIII), a multisubunit enzyme composed of 10 subunits. The complex is composed of 3 respiratory subunits cytochrome b (COB), cytochrome c1 (CYT1) and Rieske protein (RIP1), 2 core protein subunits COR1 and QCR2, and 5 low-molecular weight protein subunits QCR6, QCR7, QCR8, QCR9 and QCR10. The complex exists as an obligatory dimer and forms supercomplexes (SCs) in the inner mitochondrial membrane with a monomer or a dimer of cytochrome c oxidase (complex IV, CIV), resulting in 2 different assemblies (supercomplexes III(2)IV and III(2)IV(2)).

The protein resides in the mitochondrion inner membrane. Component of the ubiquinol-cytochrome c oxidoreductase, a multisubunit transmembrane complex that is part of the mitochondrial electron transport chain which drives oxidative phosphorylation. Plays an important role in the uptake of multiple carbon sources such acetate, lactate, amino acids or GlcNAc present in different host niches. This is Cytochrome b-c1 complex subunit 7, mitochondrial from Candida albicans (strain SC5314 / ATCC MYA-2876) (Yeast).